The chain runs to 740 residues: Ion-translocating oxidoreductase complex subunit C (740 aa).

4Fe-4S ferredoxin-type domains follow at residues 369–397 (GEPQ…QQLY) and 407–436 (KATT…VQYF). Positions 377, 380, 383, 387, 416, 419, 422, and 426 each coordinate [4Fe-4S] cluster. The segment at 602–714 (KLEQQQANAE…NAEPEEQIDP (113 aa)) is disordered. Residues 605–615 (QQQANAEPEQQ) are compositionally biased toward low complexity.

The protein belongs to the 4Fe4S bacterial-type ferredoxin family. RnfC subfamily. In terms of assembly, the complex is composed of six subunits: RsxA, RsxB, RsxC, RsxD, RsxE and RsxG. It depends on [4Fe-4S] cluster as a cofactor.

It localises to the cell inner membrane. Functionally, part of a membrane-bound complex that couples electron transfer with translocation of ions across the membrane. Required to maintain the reduced state of SoxR. This is Ion-translocating oxidoreductase complex subunit C from Escherichia coli O17:K52:H18 (strain UMN026 / ExPEC).